Here is a 250-residue protein sequence, read N- to C-terminus: DSC E3 ubiquitin ligase complex subunit 3 (250 aa).

The disordered stretch occupies residues L105–T130. Positions S107 to T130 are enriched in polar residues. Residue N187 is glycosylated (N-linked (GlcNAc...) asparagine). Transmembrane regions (helical) follow at residues T199 to W219 and M228 to Y248.

It belongs to the dsc3 family. Component of the DSC E3 ubiquitin ligase complex composed of dsc1, dsc2, dsc3 and dsc4.

The protein localises to the endoplasmic reticulum membrane. The protein resides in the golgi apparatus membrane. It functions in the pathway protein modification; protein ubiquitination. In terms of biological role, component of the DSC E3 ubiquitin ligase complex which is required for the sre1 transcriptional activator proteolytic cleavage to release the soluble transcription factor from the membrane in low oxygen or sterol conditions. The complex also plays an important role in the multivesicular body (MVB) pathway and functions in a post-endoplasmic reticulum pathway for protein degradation. This is DSC E3 ubiquitin ligase complex subunit 3 (dsc3) from Schizosaccharomyces pombe (strain 972 / ATCC 24843) (Fission yeast).